The following is a 91-amino-acid chain: Small ribosomal subunit protein bS20 (91 aa).

The disordered stretch occupies residues 72–91 (KNAASRQKSRLAKKLNGLSA).

The protein belongs to the bacterial ribosomal protein bS20 family.

Binds directly to 16S ribosomal RNA. The polypeptide is Small ribosomal subunit protein bS20 (Halalkalibacterium halodurans (strain ATCC BAA-125 / DSM 18197 / FERM 7344 / JCM 9153 / C-125) (Bacillus halodurans)).